Here is a 398-residue protein sequence, read N- to C-terminus: GTP cyclohydrolase-2 (398 aa).

The interval Met-1–Glu-172 is unknown. A GTP cyclohydrolase II region spans residues Tyr-173 to Ala-398. Arg-220–Ser-224 lines the GTP pocket. Positions 225, 236, and 238 each coordinate Zn(2+). Residues Gln-241, Glu-263–Arg-265, and Thr-285 contribute to the GTP site. The active-site Proton acceptor is the Asp-297. Arg-299 functions as the Nucleophile in the catalytic mechanism. Positions 320 and 325 each coordinate GTP. The disordered stretch occupies residues Gln-375–Ala-398.

In the C-terminal section; belongs to the GTP cyclohydrolase II family. The cofactor is Zn(2+).

It carries out the reaction GTP + 4 H2O = 2,5-diamino-6-hydroxy-4-(5-phosphoribosylamino)-pyrimidine + formate + 2 phosphate + 3 H(+). Its pathway is cofactor biosynthesis; riboflavin biosynthesis; 5-amino-6-(D-ribitylamino)uracil from GTP: step 1/4. Its function is as follows. Catalyzes the conversion of GTP to 2,5-diamino-6-ribosylamino-4(3H)-pyrimidinone 5'-phosphate (DARP), formate and pyrophosphate. This Xylella fastidiosa (strain 9a5c) protein is GTP cyclohydrolase-2 (ribA).